Reading from the N-terminus, the 443-residue chain is ATP-dependent protease ATPase subunit HslU (443 aa).

ATP-binding positions include Ile-18, Gly-60–Glu-65, Asp-256, Glu-321, and Arg-393.

This sequence belongs to the ClpX chaperone family. HslU subfamily. A double ring-shaped homohexamer of HslV is capped on each side by a ring-shaped HslU homohexamer. The assembly of the HslU/HslV complex is dependent on binding of ATP.

Its subcellular location is the cytoplasm. ATPase subunit of a proteasome-like degradation complex; this subunit has chaperone activity. The binding of ATP and its subsequent hydrolysis by HslU are essential for unfolding of protein substrates subsequently hydrolyzed by HslV. HslU recognizes the N-terminal part of its protein substrates and unfolds these before they are guided to HslV for hydrolysis. This is ATP-dependent protease ATPase subunit HslU from Tolumonas auensis (strain DSM 9187 / NBRC 110442 / TA 4).